A 921-amino-acid polypeptide reads, in one-letter code: Protein translocase subunit SecA (921 aa).

ATP-binding positions include glutamine 87, 105–109 (GEGKT), and aspartate 515. Positions 575-594 (RRIDNQLRGRSGRQGDPGSS) are disordered. The Zn(2+) site is built by cysteine 905, cysteine 907, cysteine 916, and cysteine 917.

The protein belongs to the SecA family. In terms of assembly, monomer and homodimer. Part of the essential Sec protein translocation apparatus which comprises SecA, SecYEG and auxiliary proteins SecDF-YajC and YidC. Zn(2+) is required as a cofactor.

The protein localises to the cell inner membrane. It is found in the cytoplasm. It catalyses the reaction ATP + H2O + cellular proteinSide 1 = ADP + phosphate + cellular proteinSide 2.. Part of the Sec protein translocase complex. Interacts with the SecYEG preprotein conducting channel. Has a central role in coupling the hydrolysis of ATP to the transfer of proteins into and across the cell membrane, serving both as a receptor for the preprotein-SecB complex and as an ATP-driven molecular motor driving the stepwise translocation of polypeptide chains across the membrane. This Polynucleobacter necessarius subsp. necessarius (strain STIR1) protein is Protein translocase subunit SecA.